Consider the following 408-residue polypeptide: Large ribosomal subunit protein uL4 (408 aa).

Residues 58 to 98 are disordered; that stretch reads PYAVSKKAGHQTSAESWGTGRAVSRIPRVPGGGTHRAGQGA.

The protein belongs to the universal ribosomal protein uL4 family.

The chain is Large ribosomal subunit protein uL4 (RPL4) from Prunus armeniaca (Apricot).